We begin with the raw amino-acid sequence, 156 residues long: Ribosomal RNA large subunit methyltransferase H (156 aa).

S-adenosyl-L-methionine contacts are provided by residues Leu73, Gly104, and 123–128 (IGPLTL).

It belongs to the RNA methyltransferase RlmH family. As to quaternary structure, homodimer.

The protein resides in the cytoplasm. It carries out the reaction pseudouridine(1915) in 23S rRNA + S-adenosyl-L-methionine = N(3)-methylpseudouridine(1915) in 23S rRNA + S-adenosyl-L-homocysteine + H(+). Specifically methylates the pseudouridine at position 1915 (m3Psi1915) in 23S rRNA. In Xanthomonas euvesicatoria pv. vesicatoria (strain 85-10) (Xanthomonas campestris pv. vesicatoria), this protein is Ribosomal RNA large subunit methyltransferase H.